We begin with the raw amino-acid sequence, 858 residues long: Ubiquitin carboxyl-terminal hydrolase 13 (858 aa).

Position 112 is a phosphoserine (Ser-112). The segment at Pro-185–Met-293 adopts a UBP-type; degenerate zinc-finger fold. Residues Cys-209, Cys-212, Cys-229, and His-242 each coordinate Zn(2+). Residue Lys-309 forms a Glycyl lysine isopeptide (Lys-Gly) (interchain with G-Cter in SUMO2) linkage. The USP domain maps to Thr-334–Ile-856. Cys-343 serves as the catalytic Nucleophile. Lys-403 participates in a covalent cross-link: Glycyl lysine isopeptide (Lys-Gly) (interchain with G-Cter in SUMO2). 2 consecutive UBA domains span residues Asp-650–His-691 and Gln-722–His-762. His-818 acts as the Proton acceptor in catalysis.

It belongs to the peptidase C19 family. Interacts with UFD1. Interacts (via UBA domains) with SIAH2 (when ubiquitinated). Interacts with BAG6; the interaction is direct and may mediate UBL4A deubiquitination. Interacts (via UBA 2 domain) with AMFR; the interaction is direct. Interacts with UBL4A; may be indirect via BAG6. Interacts with NEDD4.

The protein resides in the cytoplasm. The catalysed reaction is Thiol-dependent hydrolysis of ester, thioester, amide, peptide and isopeptide bonds formed by the C-terminal Gly of ubiquitin (a 76-residue protein attached to proteins as an intracellular targeting signal).. Its activity is regulated as follows. Specifically inhibited by spautin-1 (specific and potent autophagy inhibitor-1), a derivative of MBCQ that binds to USP13 and inhibits deubiquitinase activity. Regulated by PIK3C3/VPS34-containing complexes. The weak deubiquitinase activity in vitro suggests the existence of some mechanism that activates the enzyme. In terms of biological role, deubiquitinase that mediates deubiquitination of target proteins such as BECN1, MITF, SKP2 and USP10 and is involved in various processes such as autophagy, endoplasmic reticulum-associated degradation (ERAD), cell cycle progression or DNA damage response. Component of a regulatory loop that controls autophagy and p53/TP53 levels: mediates deubiquitination of BECN1, a key regulator of autophagy, leading to stabilize the PIK3C3/VPS34-containing complexes. Alternatively, forms with NEDD4 a deubiquitination complex, which subsequently stabilizes VPS34 to promote autophagy. Also deubiquitinates USP10, an essential regulator of p53/TP53 stability. In turn, PIK3C3/VPS34-containing complexes regulate USP13 stability, suggesting the existence of a regulatory system by which PIK3C3/VPS34-containing complexes regulate p53/TP53 protein levels via USP10 and USP13. Recruited by nuclear UFD1 and mediates deubiquitination of SKP2, thereby regulating endoplasmic reticulum-associated degradation (ERAD). Also regulates ERAD through the deubiquitination of UBL4A a component of the BAG6/BAT3 complex. Mediates stabilization of SIAH2 independently of deubiquitinase activity: binds ubiquitinated SIAH2 and acts by impairing SIAH2 autoubiquitination. Regulates the cell cycle progression by stabilizing cell cycle proteins such as SKP2 and AURKB. In addition, plays an important role in maintaining genomic stability and in DNA replication checkpoint activation via regulation of RAP80 and TOPBP1. Deubiquitinates the multifunctional protein HMGB1 and subsequently drives its nucleocytoplasmic localization and its secretion. Positively regulates type I and type II interferon signalings by deubiquitinating STAT1 but negatively regulates antiviral response by deubiquitinating STING1. This Mus musculus (Mouse) protein is Ubiquitin carboxyl-terminal hydrolase 13 (Usp13).